The primary structure comprises 196 residues: Phosphoheptose isomerase (196 aa).

Residues 33-192 (LIQSLKNGGK…ESECGENGNT (160 aa)) form the SIS domain. 48–50 (NGG) contributes to the substrate binding site. Residues His57 and Glu61 each contribute to the Zn(2+) site. Substrate-binding positions include Glu61, 90-91 (ND), 116-118 (STS), Ser121, and Gln168. Residues Gln168 and His176 each contribute to the Zn(2+) site.

This sequence belongs to the SIS family. GmhA subfamily. In terms of assembly, homotetramer. Zn(2+) serves as cofactor.

Its subcellular location is the cytoplasm. The enzyme catalyses 2 D-sedoheptulose 7-phosphate = D-glycero-alpha-D-manno-heptose 7-phosphate + D-glycero-beta-D-manno-heptose 7-phosphate. Its pathway is carbohydrate biosynthesis; D-glycero-D-manno-heptose 7-phosphate biosynthesis; D-glycero-alpha-D-manno-heptose 7-phosphate and D-glycero-beta-D-manno-heptose 7-phosphate from sedoheptulose 7-phosphate: step 1/1. Its function is as follows. Catalyzes the isomerization of sedoheptulose 7-phosphate in D-glycero-D-manno-heptose 7-phosphate. The polypeptide is Phosphoheptose isomerase (Helicobacter hepaticus (strain ATCC 51449 / 3B1)).